The following is a 574-amino-acid chain: Secreted lipase 1 (574 aa).

The first 17 residues, 1 to 17 (MKLSLVPIFALLSTAFA), serve as a signal peptide directing secretion. The cysteines at positions 95 and 132 are disulfide-linked. S244 serves as the catalytic Acyl-ester intermediate. A disulfide bond links C303 and C312. A glycan (N-linked (GlcNAc...) asparagine) is linked at N323. E376 (charge relay system) is an active-site residue. N386 is a glycosylation site (N-linked (GlcNAc...) asparagine). The active-site Charge relay system is H489. N-linked (GlcNAc...) asparagine glycosylation is present at N524.

This sequence belongs to the type-B carboxylesterase/lipase family.

The protein resides in the secreted. It carries out the reaction a carboxylic ester + H2O = an alcohol + a carboxylate + H(+). Secreted lipase that allows the use of hydrolyzed lipids as carbon sources. Has highest activity with methyl umbelliferyl oleate (C18:1), whereas much lower activities are obtained with the respective esters of palmitate (C16:0) and stearate (C18:0) (24% and 12% of the activity obtained with umbelliferyl oleate, respectively). Hydrolyzes 1- and 3-positioned ester bonds in preference to 2-positioned ester bonds. The production rate of monoglycerides is lower than that of diacylglycerides. Seems not required for the penetration of intact host tissue. The polypeptide is Secreted lipase 1 (Botryotinia fuckeliana (strain B05.10) (Noble rot fungus)).